A 394-amino-acid chain; its full sequence is NAD(P)H-quinone oxidoreductase subunit H (394 aa).

The protein belongs to the complex I 49 kDa subunit family. NDH-1 can be composed of about 15 different subunits; different subcomplexes with different compositions have been identified which probably have different functions.

The protein resides in the cellular thylakoid membrane. It catalyses the reaction a plastoquinone + NADH + (n+1) H(+)(in) = a plastoquinol + NAD(+) + n H(+)(out). The enzyme catalyses a plastoquinone + NADPH + (n+1) H(+)(in) = a plastoquinol + NADP(+) + n H(+)(out). Its function is as follows. NDH-1 shuttles electrons from an unknown electron donor, via FMN and iron-sulfur (Fe-S) centers, to quinones in the respiratory and/or the photosynthetic chain. The immediate electron acceptor for the enzyme in this species is believed to be plastoquinone. Couples the redox reaction to proton translocation, and thus conserves the redox energy in a proton gradient. Cyanobacterial NDH-1 also plays a role in inorganic carbon-concentration. This chain is NAD(P)H-quinone oxidoreductase subunit H, found in Parasynechococcus marenigrum (strain WH8102).